We begin with the raw amino-acid sequence, 79 residues long: UPF0180 protein Bcer98_1118 (79 aa).

The protein belongs to the UPF0180 family.

The chain is UPF0180 protein Bcer98_1118 from Bacillus cytotoxicus (strain DSM 22905 / CIP 110041 / 391-98 / NVH 391-98).